We begin with the raw amino-acid sequence, 327 residues long: N-acetylmuramoyl-L-alanine amidase sle1 (327 aa).

Positions 1–25 (MRKKIIATVIGTSALAAVTWTNADA) are cleaved as a signal peptide. LysM domains are found at residues 27 to 70 (TTYK…SLKV), 86 to 129 (STYT…KLKV), and 150 to 193 (TTYT…KLKV). Residues 68–89 (LKVSGSTSSSTSSNTSTGSTYT) are disordered. Residues 71-87 (SGSTSSSTSSNTSTGST) show a composition bias toward low complexity. Residues 203 to 327 (GSSSTGSAGY…SQVSSYVYIH (125 aa)) form the Peptidase C51 domain.

It localises to the secreted. Its subcellular location is the cell surface. It catalyses the reaction Hydrolyzes the link between N-acetylmuramoyl residues and L-amino acid residues in certain cell-wall glycopeptides.. In terms of biological role, peptidoglycan hydrolase involved in the splitting of the septum during cell division. The chain is N-acetylmuramoyl-L-alanine amidase sle1 (sle1) from Staphylococcus saprophyticus subsp. saprophyticus (strain ATCC 15305 / DSM 20229 / NCIMB 8711 / NCTC 7292 / S-41).